Consider the following 314-residue polypeptide: Endo-beta-N-acetylglucosaminidase (314 aa).

A signal peptide spans 1–47 (MQFGIVAAIADGGRTARAGGSVRPPRRPPASHTAWGLPRGRPTGQPH). Residues 14-54 (RTARAGGSVRPPRRPPASHTAWGLPRGRPTGQPHATPTKSG) form a disordered region. The 255-residue stretch at 55–309 (PTSIAYVEVN…SSMTKVLYGQ (255 aa)) folds into the GH18 domain. Glu-175 functions as the Proton donor in the catalytic mechanism.

The protein belongs to the glycosyl hydrolase 18 family. In terms of assembly, monomer.

It is found in the secreted. The enzyme catalyses an N(4)-(oligosaccharide-(1-&gt;3)-[oligosaccharide-(1-&gt;6)]-beta-D-Man-(1-&gt;4)-beta-D-GlcNAc-(1-&gt;4)-alpha-D-GlcNAc)-L-asparaginyl-[protein] + H2O = an oligosaccharide-(1-&gt;3)-[oligosaccharide-(1-&gt;6)]-beta-D-Man-(1-&gt;4)-D-GlcNAc + N(4)-(N-acetyl-beta-D-glucosaminyl)-L-asparaginyl-[protein]. Cleaves asparagine-linked oligomannose and hybrid, but not complex, oligosaccharides from glycoproteins. The polypeptide is Endo-beta-N-acetylglucosaminidase (Flavobacterium sp. (strain SK1022)).